Reading from the N-terminus, the 957-residue chain is Glycine dehydrogenase (decarboxylating) (957 aa).

Position 708 is an N6-(pyridoxal phosphate)lysine (Lys708).

This sequence belongs to the GcvP family. As to quaternary structure, the glycine cleavage system is composed of four proteins: P, T, L and H. The cofactor is pyridoxal 5'-phosphate.

The catalysed reaction is N(6)-[(R)-lipoyl]-L-lysyl-[glycine-cleavage complex H protein] + glycine + H(+) = N(6)-[(R)-S(8)-aminomethyldihydrolipoyl]-L-lysyl-[glycine-cleavage complex H protein] + CO2. Its function is as follows. The glycine cleavage system catalyzes the degradation of glycine. The P protein binds the alpha-amino group of glycine through its pyridoxal phosphate cofactor; CO(2) is released and the remaining methylamine moiety is then transferred to the lipoamide cofactor of the H protein. This Enterobacter sp. (strain 638) protein is Glycine dehydrogenase (decarboxylating).